The chain runs to 352 residues: Enhancer of mRNA-decapping protein 1 (352 aa).

Disordered regions lie at residues 1–258 and 277–352; these read MMAH…PRNH and QYPQ…SSKS. The span at 71–80 shows a compositional bias: low complexity; the sequence is HTSSNTSNNK. Polar residues-rich tracts occupy residues 93–104 and 205–225; these read NFGNESSHQNGG and TEPN…SVNV. Low complexity predominate over residues 289–309; that stretch reads GGVYPMVAPQYQQQPQQHPQQ.

The protein belongs to the EDC family.

The protein localises to the cytoplasm. Functionally, mRNA-binding protein which stimulates mRNA decapping. In Debaryomyces hansenii (strain ATCC 36239 / CBS 767 / BCRC 21394 / JCM 1990 / NBRC 0083 / IGC 2968) (Yeast), this protein is Enhancer of mRNA-decapping protein 1 (EDC1).